The chain runs to 515 residues: Sphingolipid 10-desaturase (515 aa).

A helical membrane pass occupies residues 3 to 23 (AVWALLWALQLGTLVGCALVL). One can recognise a Cytochrome b5 heme-binding domain in the interval 46-113 (AKPISDQKAA…DISFVFRVMH (68 aa)). The heme site is built by H90 and H113. Residues 198–218 (TWLLWNTAVLISIIALSVISM) form a helical membrane-spanning segment. A Histidine box-1 motif is present at residues 245 to 249 (HDAEH). A helical membrane pass occupies residues 258–278 (LNDILGWIYGTVFLGVNGAWW). The short motif at 281–286 (EHREHH) is the Histidine box-2 element. 3 helical membrane-spanning segments follow: residues 322 to 342 (IIHFLTNFQHILFLPIIFIVG), 359 to 379 (PWTILGNVCHILLHYAILSQT), and 382 to 402 (PIPVYIIGSLWQAILSLQLLG). Positions 447–451 (HYSHH) match the Histidine box-3 motif.

The protein belongs to the fatty acid desaturase type 1 family. Requires Fe(2+) as cofactor.

Its subcellular location is the membrane. It catalyses the reaction a (4E,8E)-4-sphinga-4,8-dienine ceramide + 2 Fe(II)-[cytochrome b5] + O2 + 2 H(+) = an N-acyl-(4E,8E,10E)-sphingatrienine + 2 Fe(III)-[cytochrome b5] + 2 H2O. It participates in lipid metabolism; sphingolipid metabolism. In terms of biological role, fatty acid desaturase that catalyzes the introduction of the third double bond at the Delta(10) position in d18:3Delta4,8,10 triunsaturated sphingolipid long fatty acid chains. The cytochrome b5 domain probably acts as the direct electron donor to the active site of the desaturase. The sequence is that of Sphingolipid 10-desaturase from Thalassiosira pseudonana (Marine diatom).